The primary structure comprises 185 residues: CDP-diacylglycerol--glycerol-3-phosphate 3-phosphatidyltransferase (185 aa).

The next 4 helical transmembrane spans lie at 7 to 26 (IFLT…AFYL), 33 to 52 (FITT…DGYL), 89 to 108 (FWIT…ISAL), and 151 to 172 (IAAI…IQYL).

Belongs to the CDP-alcohol phosphatidyltransferase class-I family.

It localises to the cell membrane. It catalyses the reaction a CDP-1,2-diacyl-sn-glycerol + sn-glycerol 3-phosphate = a 1,2-diacyl-sn-glycero-3-phospho-(1'-sn-glycero-3'-phosphate) + CMP + H(+). It participates in phospholipid metabolism; phosphatidylglycerol biosynthesis; phosphatidylglycerol from CDP-diacylglycerol: step 1/2. Its function is as follows. This protein catalyzes the committed step to the synthesis of the acidic phospholipids. This chain is CDP-diacylglycerol--glycerol-3-phosphate 3-phosphatidyltransferase (pgsA), found in Haemophilus influenzae (strain ATCC 51907 / DSM 11121 / KW20 / Rd).